The primary structure comprises 333 residues: Phosphate acyltransferase (333 aa).

The protein belongs to the PlsX family. As to quaternary structure, homodimer. Probably interacts with PlsY.

It is found in the cytoplasm. It catalyses the reaction a fatty acyl-[ACP] + phosphate = an acyl phosphate + holo-[ACP]. It functions in the pathway lipid metabolism; phospholipid metabolism. In terms of biological role, catalyzes the reversible formation of acyl-phosphate (acyl-PO(4)) from acyl-[acyl-carrier-protein] (acyl-ACP). This enzyme utilizes acyl-ACP as fatty acyl donor, but not acyl-CoA. This Enterococcus faecalis (strain ATCC 700802 / V583) protein is Phosphate acyltransferase.